A 277-amino-acid polypeptide reads, in one-letter code: Glutamate racemase (277 aa).

Residues 9-10 (DS) and 41-42 (YG) each bind substrate. The Proton donor/acceptor role is filled by Cys73. Residue 74-75 (NT) coordinates substrate. Cys183 functions as the Proton donor/acceptor in the catalytic mechanism. Position 184 to 185 (184 to 185 (TH)) interacts with substrate.

It belongs to the aspartate/glutamate racemases family.

It carries out the reaction L-glutamate = D-glutamate. It functions in the pathway cell wall biogenesis; peptidoglycan biosynthesis. Its function is as follows. Provides the (R)-glutamate required for cell wall biosynthesis. The chain is Glutamate racemase from Shewanella denitrificans (strain OS217 / ATCC BAA-1090 / DSM 15013).